The chain runs to 352 residues: 4-hydroxy-3-methylbut-2-en-1-yl diphosphate synthase (flavodoxin) (352 aa).

The [4Fe-4S] cluster site is built by Cys-263, Cys-266, Cys-298, and Glu-305.

This sequence belongs to the IspG family. [4Fe-4S] cluster serves as cofactor.

It carries out the reaction (2E)-4-hydroxy-3-methylbut-2-enyl diphosphate + oxidized [flavodoxin] + H2O + 2 H(+) = 2-C-methyl-D-erythritol 2,4-cyclic diphosphate + reduced [flavodoxin]. It participates in isoprenoid biosynthesis; isopentenyl diphosphate biosynthesis via DXP pathway; isopentenyl diphosphate from 1-deoxy-D-xylulose 5-phosphate: step 5/6. Converts 2C-methyl-D-erythritol 2,4-cyclodiphosphate (ME-2,4cPP) into 1-hydroxy-2-methyl-2-(E)-butenyl 4-diphosphate. The polypeptide is 4-hydroxy-3-methylbut-2-en-1-yl diphosphate synthase (flavodoxin) (Sulfurimonas denitrificans (strain ATCC 33889 / DSM 1251) (Thiomicrospira denitrificans (strain ATCC 33889 / DSM 1251))).